Consider the following 845-residue polypeptide: Krueppel homolog 1 (845 aa).

Positions 141–164 are disordered; sequence QKQQQQQQHESITNAAPTAAPSAQ. 8 consecutive C2H2-type zinc fingers follow at residues 194–216, 271–293, 299–321, 327–349, 355–377, 383–407, 413–435, and 441–463; these read FKCDQCGMTFGSKSAHTSHTKSH, YQCNVCQKTFAVPARLIRHYRTH, FECEFCHKLFSVKENLQVHRRIH, YKCDVCGRAFEHSGKLHRHMRIH, HKCSVCEKTFIQSGQLVIHMRTH, YKCPEPGCGKGFTCSKQLKVHSRTH, YHCDICFRDFGYNHVLKLHRVQH, and YKCTICDETFKNKKEMEAHIKGH. 2 disordered regions span residues 469 to 610 and 757 to 845; these read DDEA…VQGQ and GLRS…AKAS. Composition is skewed to low complexity over residues 474–491, 498–508, and 532–559; these read AAAASAAASTSAGSSAGS, SSNSESSNHSP, and ATLSIPTSSPLSPSSLSSTYSPSASSMA. Over residues 582-591 the composition is skewed to polar residues; sequence SGVSSAQPAH. Positions 759–775 are enriched in low complexity; the sequence is RSSTESPERSSSPESDS. Positions 796–809 are enriched in basic and acidic residues; the sequence is NKGDDGQVDSEKAS. The segment covering 810-823 has biased composition (low complexity); the sequence is GDGTSAAGGAASVG.

It belongs to the krueppel C2H2-type zinc-finger protein family.

In terms of biological role, plays a general role in the hierarchies of gene expression leading to metamorphosis. This Drosophila melanogaster (Fruit fly) protein is Krueppel homolog 1 (Kr-h1).